The chain runs to 3131 residues: Intermembrane lipid transfer protein vps1302 (3131 aa).

The 114-residue stretch at Leu2–Gln115 folds into the Chorein N-terminal domain. Positions Asp774 to Tyr801 are enriched in basic and acidic residues. The interval Asp774–Pro807 is disordered. In terms of domain architecture, SHR-BD spans Lys2085–Lys2363.

The protein belongs to the VPS13 family.

It localises to the golgi apparatus. The protein localises to the trans-Golgi network. In terms of biological role, mediates the transfer of lipids between membranes at organelle contact sites. May play a role in mitochondrial lipid homeostasis, Golgi vesicle transport, reticulophagy, actin cytoskeleton organization and formation of the forespore membrane. The protein is Intermembrane lipid transfer protein vps1302 of Schizosaccharomyces pombe (strain 972 / ATCC 24843) (Fission yeast).